The chain runs to 154 residues: Superoxide dismutase [Cu-Zn] (154 aa).

Residues His47, His49, and His64 each coordinate Cu cation. A disulfide bridge connects residues Cys58 and Cys147. Zn(2+)-binding residues include His64, His72, His81, and Asp84. Cu cation is bound at residue His121. A compositionally biased stretch (basic and acidic residues) spans 125-137; it reads DDLGRGGNEESKK. Positions 125–147 are disordered; that stretch reads DDLGRGGNEESKKTGNAGPRPAC. Arg144 contacts substrate.

Homodimer. It depends on Cu cation as a cofactor. Zn(2+) is required as a cofactor.

The protein localises to the cytoplasm. The catalysed reaction is 2 superoxide + 2 H(+) = H2O2 + O2. Destroys radicals which are normally produced within the cells and which are toxic to biological systems. The sequence is that of Superoxide dismutase [Cu-Zn] from Aspergillus niger.